Consider the following 66-residue polypeptide: U1-theraphotoxin-Cg1b (66 aa).

Positions 1–21 (MKTSALFVIFGLVLLFCNSFA) are cleaved as a signal peptide. Residues 22-29 (AELKTTGR) constitute a propeptide that is removed on maturation. Intrachain disulfides connect C31–C46, C38–C51, and C45–C58.

Belongs to the neurotoxin 10 (Hwtx-1) family. 46 (Jztx-7/10/12) subfamily. As to expression, expressed by the venom gland.

It localises to the secreted. Functionally, probable ion channel inhibitor. The chain is U1-theraphotoxin-Cg1b from Chilobrachys guangxiensis (Chinese earth tiger tarantula).